The primary structure comprises 934 residues: Desmocollin 2-like protein (934 aa).

4 consecutive Cadherin domains span residues 167-274 (RWRP…APEF), 274-381 (FTGN…PPTF), 382-494 (KEKL…GPEF), and 495-600 (NPNI…IPVI). Residues 167-716 (RWRPLPFSVV…SASVSLGNYG (550 aa)) lie on the Extracellular side of the membrane. N-linked (GlcNAc...) asparagine glycosylation is found at N197, N296, and N316. N509, N565, and N569 each carry an N-linked (GlcNAc...) asparagine glycan. Residues 717 to 737 (ILALVLSGLLLLLLCLFLIFF) form a helical membrane-spanning segment. At 738–934 (CTTKRDKLQI…ICYTTNKTGK (197 aa)) the chain is on the cytoplasmic side.

As to expression, expressed at low levels in the brain and heart.

Its subcellular location is the cell junction. The protein resides in the desmosome. It localises to the cell membrane. In terms of biological role, a component of desmosome cell-cell junctions which are required for positive regulation of cellular adhesion. Involved in the interaction of plaque proteins and intermediate filaments mediating cell-cell adhesion. Involved in the formation and structural organization of desmosome cell-cell junctions during embryonic development. Required for embryogenesis, specifically for progression of epiboly and normal convergence-extension movements during gastrulation. Required for the development of desmosomal-rich midlines in the heart. Plays an important role in ventricular contraction and resulting heart stroke volume. The polypeptide is Desmocollin 2-like protein (Danio rerio (Zebrafish)).